The chain runs to 351 residues: Cyanide hydratase (351 aa).

The region spanning 6 to 285 is the CN hydrolase domain; sequence YKAAAVTSEP…DGLLFVDIDL (280 aa). Glu46 acts as the Proton acceptor in catalysis. The active site involves Lys128. Catalysis depends on Cys163, which acts as the Nucleophile.

It belongs to the carbon-nitrogen hydrolase superfamily. Nitrilase family. As to quaternary structure, oligomer of dimers, forming left-handed helical fibers with a diameter of 13 nm but with lengths ranging from approximately 1 um at the leading edge of the peak to having approximately the same length and diameter at the trailing edge.

The catalysed reaction is formamide = hydrogen cyanide + H2O. Catalyzes the hydration of cyanide to formamide. Degradation of cyanide may be important for plant pathogenic fungi in infection of cyanogenic plants. The sequence is that of Cyanide hydratase from Neurospora crassa (strain ATCC 24698 / 74-OR23-1A / CBS 708.71 / DSM 1257 / FGSC 987).